The following is a 414-amino-acid chain: Esterase FrsA (414 aa).

The protein belongs to the FrsA family.

The enzyme catalyses a carboxylic ester + H2O = an alcohol + a carboxylate + H(+). In terms of biological role, catalyzes the hydrolysis of esters. The polypeptide is Esterase FrsA (Shigella flexneri serotype 5b (strain 8401)).